A 156-amino-acid polypeptide reads, in one-letter code: Ribosome maturation factor RimP (156 aa).

It belongs to the RimP family.

The protein resides in the cytoplasm. Functionally, required for maturation of 30S ribosomal subunits. The chain is Ribosome maturation factor RimP from Exiguobacterium sp. (strain ATCC BAA-1283 / AT1b).